Here is a 369-residue protein sequence, read N- to C-terminus: Fructose-bisphosphate aldolase 2 (369 aa).

Residue aspartate 40 participates in dihydroxyacetone phosphate binding. Residues serine 42 and threonine 45 each coordinate D-glyceraldehyde 3-phosphate. Arginine 49 lines the beta-D-fructose 1,6-bisphosphate pocket. Lysine 113 is a binding site for D-glyceraldehyde 3-phosphate. Lysine 152 contacts dihydroxyacetone phosphate. Glutamate 195 contacts D-glyceraldehyde 3-phosphate. Catalysis depends on glutamate 195, which acts as the Proton acceptor. Lysine 237, serine 279, and glycine 280 together coordinate dihydroxyacetone phosphate. The active-site Schiff-base intermediate with dihydroxyacetone phosphate is lysine 237. Beta-D-fructose 1,6-bisphosphate-binding positions include 279-281 (SGG) and serine 307. Dihydroxyacetone phosphate is bound by residues glycine 309 and arginine 310. Residue arginine 310 participates in beta-D-fructose 1,6-bisphosphate binding.

This sequence belongs to the class I fructose-bisphosphate aldolase family.

The protein localises to the cytoplasm. It is found in the membrane. It localises to the host cell membrane. It catalyses the reaction beta-D-fructose 1,6-bisphosphate = D-glyceraldehyde 3-phosphate + dihydroxyacetone phosphate. Its pathway is carbohydrate degradation; glycolysis; D-glyceraldehyde 3-phosphate and glycerone phosphate from D-glucose: step 4/4. In terms of biological role, plays a key role in glycolysis by catalyzing the cleavage of fructose 1,6-bisphosphate into dihydroxyacetone phosphate and glyceraldehyde 3-phosphate. The chain is Fructose-bisphosphate aldolase 2 (ALDO2) from Plasmodium berghei (strain Anka).